The following is a 102-amino-acid chain: NADH-quinone oxidoreductase subunit K (102 aa).

3 consecutive transmembrane segments (helical) span residues isoleucine 5–leucine 25, isoleucine 31–phenylalanine 51, and phenylalanine 66–phenylalanine 86.

Belongs to the complex I subunit 4L family. In terms of assembly, NDH-1 is composed of 14 different subunits. Subunits NuoA, H, J, K, L, M, N constitute the membrane sector of the complex.

It localises to the cell inner membrane. The catalysed reaction is a quinone + NADH + 5 H(+)(in) = a quinol + NAD(+) + 4 H(+)(out). Functionally, NDH-1 shuttles electrons from NADH, via FMN and iron-sulfur (Fe-S) centers, to quinones in the respiratory chain. The immediate electron acceptor for the enzyme in this species is believed to be ubiquinone. Couples the redox reaction to proton translocation (for every two electrons transferred, four hydrogen ions are translocated across the cytoplasmic membrane), and thus conserves the redox energy in a proton gradient. In Bartonella grahamii (strain as4aup), this protein is NADH-quinone oxidoreductase subunit K.